Reading from the N-terminus, the 148-residue chain is MQLTVKALKGKEANIQVSEGDTVLAVKRLVEEKLKVPVSQQRLLFRGKALADEHCLAHYSIGPGSRLNLMVKEQVAPEGHSGGNTAWKSLSVILRKHFSPTDAERVLEYVQKDYERSLSLLSLDDIERLATRILHPQYSEATDLGFLD.

Positions 1–76 (MQLTVKALKG…LNLMVKEQVA (76 aa)) constitute a Ubiquitin-like domain.

Component of the bag6/bat3 complex.

Its subcellular location is the cytoplasm. It localises to the cytosol. The protein localises to the nucleus. Its function is as follows. As part of a cytosolic protein quality control complex, the bag6/bat3 complex, maintains misfolded and hydrophobic patches-containing proteins in a soluble state and participates in their proper delivery to the endoplasmic reticulum or alternatively can promote their sorting to the proteasome where they undergo degradation. The bag6/bat3 complex is involved in the post-translational delivery of tail-anchored/type II transmembrane proteins to the endoplasmic reticulum membrane. Similarly, the bag6/bat3 complex also functions as a sorting platform for proteins of the secretory pathway that are mislocalized to the cytosol either delivering them to the proteasome for degradation or to the endoplasmic reticulum. The bag6/bat3 complex also plays a role in the endoplasmic reticulum-associated degradation (ERAD), a quality control mechanism that eliminates unwanted proteins of the endoplasmic reticulum through their retrotranslocation to the cytosol and their targeting to the proteasome. It maintains these retrotranslocated proteins in an unfolded yet soluble state condition in the cytosol to ensure their proper delivery to the proteasome. This Xenopus tropicalis (Western clawed frog) protein is Ubiquitin-like protein 4A (ubl4a).